Here is a 42-residue protein sequence, read N- to C-terminus: Alpha-lactalbumin I (42 aa).

The C-type lysozyme domain occupies 1-42 (IDYRKCQASQILKEHGMDKVIPLPELVCTMFHISGLSPQAEV).

It belongs to the glycosyl hydrolase 22 family. Lactose synthase (LS) is a heterodimer of a catalytic component, beta1,4-galactosyltransferase (beta4Gal-T1) and a regulatory component, alpha-lactalbumin (LA). As to expression, mammary gland specific. Secreted in milk.

The protein localises to the secreted. Functionally, regulatory subunit of lactose synthase, changes the substrate specificity of galactosyltransferase in the mammary gland making glucose a good acceptor substrate for this enzyme. This enables LS to synthesize lactose, the major carbohydrate component of milk. In other tissues, galactosyltransferase transfers galactose onto the N-acetylglucosamine of the oligosaccharide chains in glycoproteins. This Macropus giganteus (Eastern gray kangaroo) protein is Alpha-lactalbumin I (LALBA).